Reading from the N-terminus, the 274-residue chain is tRNA uridine(34) hydroxylase (274 aa).

A Rhodanese domain is found at 121-217; sequence SRSDVYTIDT…YFKSTKNTNN (97 aa). The active-site Cysteine persulfide intermediate is the cysteine 177.

This sequence belongs to the TrhO family.

The enzyme catalyses uridine(34) in tRNA + AH2 + O2 = 5-hydroxyuridine(34) in tRNA + A + H2O. Its function is as follows. Catalyzes oxygen-dependent 5-hydroxyuridine (ho5U) modification at position 34 in tRNAs. This chain is tRNA uridine(34) hydroxylase, found in Ehrlichia canis (strain Jake).